A 113-amino-acid chain; its full sequence is Protein ZEO1 (113 aa).

Polar residues predominate over residues 1-16; it reads MSEIQNKAETAAQDVQ. Positions 1–96 are disordered; that stretch reads MSEIQNKAET…AVSEKKETKK (96 aa). Residue Ser2 is modified to N-acetylserine. At Ser2 the chain carries Phosphoserine. Residues 2–97 adopt a coiled-coil conformation; the sequence is SEIQNKAETA…VSEKKETKKE (96 aa). Basic and acidic residues predominate over residues 17–37; sequence QKLEETKESLQNKGQEVKEQA. Residues Lys18 and Lys23 each participate in a glycyl lysine isopeptide (Lys-Gly) (interchain with G-Cter in ubiquitin) cross-link. The residue at position 25 (Ser25) is a Phosphoserine. Residues Lys29 and Lys34 each participate in a glycyl lysine isopeptide (Lys-Gly) (interchain with G-Cter in ubiquitin) cross-link. Ser40 carries the post-translational modification Phosphoserine. A Glycyl lysine isopeptide (Lys-Gly) (interchain with G-Cter in ubiquitin) cross-link involves residue Lys45. Thr49 is subject to Phosphothreonine. The segment covering 53-82 has biased composition (basic and acidic residues); sequence EQVKKEEQNIADGVEQKKTEAANKVEETKK. Residues Lys57 and Lys82 each participate in a glycyl lysine isopeptide (Lys-Gly) (interchain with G-Cter in ubiquitin) cross-link.

Interacts with MID2. Phosphorylation of Ser-25 is induced 2-fold in response to mating pheromone.

Its subcellular location is the cell membrane. Its function is as follows. Acts antagonistically to MID2 in signaling cell wall stress to the PKC1-MPK1 cell integrity pathway. This Saccharomyces cerevisiae (strain ATCC 204508 / S288c) (Baker's yeast) protein is Protein ZEO1 (ZEO1).